We begin with the raw amino-acid sequence, 88 residues long: U-scoloptoxin(01)-Tl1a (88 aa).

The signal sequence occupies residues Met-1–Ala-16. The 57-residue stretch at Gly-25 to Arg-81 folds into the Chitin-binding type-2 domain. An intrachain disulfide couples Cys-58 to Cys-71.

This sequence belongs to the scoloptoxin-01 family. In terms of processing, contains 3 disulfide bonds. In terms of tissue distribution, expressed by the venom gland.

Its subcellular location is the secreted. In Thereuopoda longicornis (Long-legged centipede), this protein is U-scoloptoxin(01)-Tl1a.